The chain runs to 523 residues: Arabinose import ATP-binding protein AraG (523 aa).

ABC transporter domains are found at residues 20 to 255 and 268 to 511; these read LAFR…MVGR and IGSE…MLRT. Residue 52-59 coordinates ATP; it reads GENGAGKS.

Belongs to the ABC transporter superfamily. Arabinose importer (TC 3.A.1.2.2) family. The complex is composed of two ATP-binding proteins (AraG), two transmembrane proteins (AraH) and a solute-binding protein (AraF).

The protein localises to the cell inner membrane. The enzyme catalyses L-arabinose(out) + ATP + H2O = L-arabinose(in) + ADP + phosphate + H(+). Part of the ABC transporter complex AraFGH involved in arabinose import. Responsible for energy coupling to the transport system. This Yersinia pestis bv. Antiqua (strain Antiqua) protein is Arabinose import ATP-binding protein AraG.